We begin with the raw amino-acid sequence, 314 residues long: Olfactory receptor 5B17 (314 aa).

Topologically, residues 1–23 are extracellular; sequence MENNTEVSEFILLGLTNAPELQV. An N-linked (GlcNAc...) asparagine glycan is attached at Asn-3. Residues 24 to 44 traverse the membrane as a helical segment; the sequence is PLFIMFTLIYLITLTGNLGMI. Over 45–52 the chain is Cytoplasmic; it reads ILILLDSH. The helical transmembrane segment at 53–73 threads the bilayer; sequence LHTPMYFFLSNLSLAGIGYSS. The Extracellular portion of the chain corresponds to 74–97; the sequence is AVTPKVLTGLLIEDKAISYSACAA. Cys-95 and Cys-187 are oxidised to a cystine. The helical transmembrane segment at 98–118 threads the bilayer; the sequence is QMFFCAVFATVENYLLSSMAY. Over 119-137 the chain is Cytoplasmic; it reads DRYAAVCNPLHYTTTMTTR. The helical transmembrane segment at 138 to 158 threads the bilayer; the sequence is VCACLAIGCYVIGFLNASIQI. At 159–194 the chain is on the extracellular side; the sequence is GDTFRLSFCMSNVIHHFFCDKPAVITLTCSEKHISE. Residues 195–215 traverse the membrane as a helical segment; that stretch reads LILVLISSFNVFFALLVTLIS. The Cytoplasmic portion of the chain corresponds to 216–235; that stretch reads YLFILITILKRHTGKGYQKP. Residues 236 to 256 form a helical membrane-spanning segment; it reads LSTCGSHLIAIFLFYITVIIM. Residues 257–269 lie on the Extracellular side of the membrane; it reads YIRPSSSHSMDTD. The chain crosses the membrane as a helical span at residues 270-290; it reads KIASVFYTMIIPMLSPIVYTL. At 291–314 the chain is on the cytoplasmic side; it reads RNKDVKNAFMKVVEKAKYSLDSVF.

The protein belongs to the G-protein coupled receptor 1 family.

Its subcellular location is the cell membrane. Odorant receptor. This Homo sapiens (Human) protein is Olfactory receptor 5B17 (OR5B17).